The sequence spans 262 residues: Small ribosomal subunit protein uS2 (262 aa).

The protein belongs to the universal ribosomal protein uS2 family.

The chain is Small ribosomal subunit protein uS2 from Azobacteroides pseudotrichonymphae genomovar. CFP2.